The primary structure comprises 371 residues: Ferrochelatase (371 aa).

Fe cation is bound by residues histidine 218 and glutamate 299.

This sequence belongs to the ferrochelatase family.

The protein resides in the cytoplasm. The catalysed reaction is heme b + 2 H(+) = protoporphyrin IX + Fe(2+). It functions in the pathway porphyrin-containing compound metabolism; protoheme biosynthesis; protoheme from protoporphyrin-IX: step 1/1. Its function is as follows. Catalyzes the ferrous insertion into protoporphyrin IX. In Ralstonia pickettii (strain 12J), this protein is Ferrochelatase.